A 123-amino-acid chain; its full sequence is Fluoride-specific ion channel FluC (123 aa).

Transmembrane regions (helical) follow at residues 3-23 (IAWV…LSNA), 34-54 (WGTL…FYLF), 67-87 (LVLV…LETL), and 99-119 (LLNM…GLVV). Residues glycine 74 and threonine 77 each contribute to the Na(+) site.

Belongs to the fluoride channel Fluc/FEX (TC 1.A.43) family.

The protein localises to the cell inner membrane. The enzyme catalyses fluoride(in) = fluoride(out). With respect to regulation, na(+) is not transported, but it plays an essential structural role and its presence is essential for fluoride channel function. Functionally, fluoride-specific ion channel. Important for reducing fluoride concentration in the cell, thus reducing its toxicity. The sequence is that of Fluoride-specific ion channel FluC from Magnetococcus marinus (strain ATCC BAA-1437 / JCM 17883 / MC-1).